Reading from the N-terminus, the 847-residue chain is Ras GTPase-activating protein 2 (847 aa).

Positions Met1 to Pro18 are enriched in low complexity. The disordered stretch occupies residues Met1–Arg31. N-acetylalanine is present on Ala2. 2 C2 domains span residues Gly19–Phe137 and Val148–Tyr288. The 218-residue stretch at Asn371–Ile588 folds into the Ras-GAP domain. Residue Ser554 is modified to Phosphoserine. Positions Val603–Arg704 constitute a PH domain. The Btk-type zinc finger occupies Asn706 to Gly742. Residues His714, Cys725, Cys726, and Cys736 each coordinate Zn(2+). The interval Asp819–Ser847 is disordered.

As to expression, widely expressed. Higher expression in brain, placenta, and kidney.

The protein localises to the cell membrane. Its function is as follows. Inhibitory regulator of the Ras-cyclic AMP pathway. May bind inositol tetrakisphosphate (IP4) and phospholipids. The chain is Ras GTPase-activating protein 2 (Rasa2) from Rattus norvegicus (Rat).